Here is a 302-residue protein sequence, read N- to C-terminus: MKIFTSKKGQLSQLKQQKFKLEKDIQRLFEENLTLLSGYIFIRSEFSIKNSRIDTLAFDPETQAFVIIEYKRQQNSSVVDQGISYLNLMLEYKADFIVEYNEKQKVPLKRNDVDWSQSKVIFVSPAFNDFQIQATNFKDLPIELWEVNRFDNDIITLNIINKSKSAPNIKAVSNEKREEFSILKEIKVYQESDHLADKTDFIQELYEDFKQGILNLDPDIEINTRKLYIAFKKDRNIADIRIQQKNLKIWINLPYGELDDPKNLAKNVSNTGHWGNGDYEITIESTQYLEYIMSLIKQAIKD.

This is an uncharacterized protein from Haemophilus influenzae (strain ATCC 51907 / DSM 11121 / KW20 / Rd).